Reading from the N-terminus, the 357-residue chain is Peptide chain release factor 1 (357 aa).

At Gln-233 the chain carries N5-methylglutamine.

It belongs to the prokaryotic/mitochondrial release factor family. Methylated by PrmC. Methylation increases the termination efficiency of RF1.

The protein resides in the cytoplasm. Functionally, peptide chain release factor 1 directs the termination of translation in response to the peptide chain termination codons UAG and UAA. This is Peptide chain release factor 1 from Flavobacterium psychrophilum (strain ATCC 49511 / DSM 21280 / CIP 103535 / JIP02/86).